The sequence spans 304 residues: N-acetylmuramic acid 6-phosphate etherase (304 aa).

Positions 58–221 (IVDRMKQGGR…TTASMVKMGK (164 aa)) constitute an SIS domain. Glu-86 (proton donor) is an active-site residue. Residue Glu-117 is part of the active site.

This sequence belongs to the GCKR-like family. MurNAc-6-P etherase subfamily. In terms of assembly, homodimer.

The enzyme catalyses N-acetyl-D-muramate 6-phosphate + H2O = N-acetyl-D-glucosamine 6-phosphate + (R)-lactate. The protein operates within amino-sugar metabolism; N-acetylmuramate degradation. Its function is as follows. Specifically catalyzes the cleavage of the D-lactyl ether substituent of MurNAc 6-phosphate, producing GlcNAc 6-phosphate and D-lactate. The polypeptide is N-acetylmuramic acid 6-phosphate etherase (Clostridioides difficile (strain 630) (Peptoclostridium difficile)).